The sequence spans 150 residues: Deoxyuridine 5'-triphosphate nucleotidohydrolase (150 aa).

Substrate-binding positions include 69–71 (RSG), Asn82, 86–88 (LID), and Met96.

The protein belongs to the dUTPase family. The cofactor is Mg(2+).

It carries out the reaction dUTP + H2O = dUMP + diphosphate + H(+). The protein operates within pyrimidine metabolism; dUMP biosynthesis; dUMP from dCTP (dUTP route): step 2/2. Its function is as follows. This enzyme is involved in nucleotide metabolism: it produces dUMP, the immediate precursor of thymidine nucleotides and it decreases the intracellular concentration of dUTP so that uracil cannot be incorporated into DNA. The sequence is that of Deoxyuridine 5'-triphosphate nucleotidohydrolase from Leptothrix cholodnii (strain ATCC 51168 / LMG 8142 / SP-6) (Leptothrix discophora (strain SP-6)).